A 168-amino-acid chain; its full sequence is MSIFSSLFKVIKKVISKVVATLKKIFKKIWPLLLIVAIIYFAPYLAGFFTSAGFTGIGGIFSSIATTITPTLTSFLSTAWSGVGSLASTAWSGFQSLGMGTQLAVVSGAAALIAPEETAQLVTEIGTTVGDIAGTIIGGVAKALPGWIWIAAGGLAVWALWPSSDSKE.

The next 4 helical transmembrane spans lie at 29–49 (IWPLLLIVAIIYFAPYLAGFF), 52–72 (AGFTGIGGIFSSIATTITPTL), 94–114 (FQSLGMGTQLAVVSGAAALIA), and 143–163 (ALPGWIWIAAGGLAVWALWPS).

As to quaternary structure, interacts with P3.

Its subcellular location is the virion membrane. Its function is as follows. Mediates the fusion with the host outer membrane during virus entry into the host cell. The sequence is that of Fusion protein P6 (P6) from Pseudomonas savastanoi pv. phaseolicola (Pseudomonas syringae pv. phaseolicola).